The chain runs to 459 residues: Phosphoglucosamine mutase (459 aa).

Residue Ser102 is the Phosphoserine intermediate of the active site. Mg(2+)-binding residues include Ser102, Asp243, Asp245, and Asp247. Ser102 is modified (phosphoserine).

This sequence belongs to the phosphohexose mutase family. Requires Mg(2+) as cofactor. In terms of processing, activated by phosphorylation.

The enzyme catalyses alpha-D-glucosamine 1-phosphate = D-glucosamine 6-phosphate. Catalyzes the conversion of glucosamine-6-phosphate to glucosamine-1-phosphate. The protein is Phosphoglucosamine mutase of Bartonella henselae (strain ATCC 49882 / DSM 28221 / CCUG 30454 / Houston 1) (Rochalimaea henselae).